The following is a 195-amino-acid chain: Adenylate kinase (195 aa).

ATP is bound at residue 10 to 15; sequence GAGKGT. The segment at 30 to 59 is NMP; it reads STGDMLRAAVAAGTPVGLKAKAVMDAGGLV. AMP-binding positions include Thr31, Arg36, 57–59, 85–88, and Gln92; these read GLV and GFPR. Positions 126–143 are LID; sequence NRAAEAQAKGEAVRKDDD. Position 127 (Arg127) interacts with ATP. Arg150 is an AMP binding site. Ala178 serves as a coordination point for ATP.

This sequence belongs to the adenylate kinase family. As to quaternary structure, monomer.

The protein localises to the cytoplasm. The catalysed reaction is AMP + ATP = 2 ADP. The protein operates within purine metabolism; AMP biosynthesis via salvage pathway; AMP from ADP: step 1/1. Functionally, catalyzes the reversible transfer of the terminal phosphate group between ATP and AMP. Plays an important role in cellular energy homeostasis and in adenine nucleotide metabolism. This chain is Adenylate kinase, found in Xanthobacter autotrophicus (strain ATCC BAA-1158 / Py2).